The following is a 361-amino-acid chain: MDIQMANNFTPPSATPQGNDCDLYAHHSTARIVMPLHYSLVFIIGLVGNLLALVVIVQNRKKINSTTLYSTNLVISDILFTTALPTRIAYYAMGFDWRIGDALCRITALVFYINTYAGVNFMTCLSIDRFIAVVHPLRYNKIKRIEHAKGVCIFVWILVFAQTLPLLINPMSKQEAERITCMEYPNFEETKSLPWILLGACFIGYVLPLIIILICYSQICCKLFRTAKQNPLTEKSGVNKKALNTIILIIVVFVLCFTPYHVAIIQHMIKKLRFSNFLECSQRHSFQISLHFTVCLMNFNCCMDPFIYFFACKGYKRKVMRMLKRQVSVSISSAVKSAPEENSREMTETQMMIHSKSSNGK.

At 1 to 31 the chain is on the extracellular side; sequence MDIQMANNFTPPSATPQGNDCDLYAHHSTAR. A helical membrane pass occupies residues 32-57; sequence IVMPLHYSLVFIIGLVGNLLALVVIV. At 58 to 77 the chain is on the cytoplasmic side; it reads QNRKKINSTTLYSTNLVISD. Residues 78–95 form a helical membrane-spanning segment; the sequence is ILFTTALPTRIAYYAMGF. R87 serves as a coordination point for 7alpha,25-dihydroxycholesterol. Residues 96 to 105 are Extracellular-facing; that stretch reads DWRIGDALCR. A disulfide bridge connects residues C104 and C181. Residues 106–127 form a helical membrane-spanning segment; sequence ITALVFYINTYAGVNFMTCLSI. Y112 and Y116 together coordinate 7alpha,25-dihydroxycholesterol. The tract at residues 126–134 is interaction with G proteins; the sequence is SIDRFIAVV. Topologically, residues 128–149 are cytoplasmic; the sequence is DRFIAVVHPLRYNKIKRIEHAK. The helical transmembrane segment at 150–168 threads the bilayer; sequence GVCIFVWILVFAQTLPLLI. Topologically, residues 169-192 are extracellular; that stretch reads NPMSKQEAERITCMEYPNFEETKS. A helical membrane pass occupies residues 193 to 215; it reads LPWILLGACFIGYVLPLIIILIC. The Cytoplasmic portion of the chain corresponds to 216-241; it reads YSQICCKLFRTAKQNPLTEKSGVNKK. Residues 242–265 form a helical membrane-spanning segment; it reads ALNTIILIIVVFVLCFTPYHVAII. A 7alpha,25-dihydroxycholesterol-binding site is contributed by Y260. The Extracellular portion of the chain corresponds to 266–287; it reads QHMIKKLRFSNFLECSQRHSFQ. Residues 288–312 form a helical membrane-spanning segment; it reads ISLHFTVCLMNFNCCMDPFIYFFAC. Topologically, residues 313–361 are cytoplasmic; that stretch reads KGYKRKVMRMLKRQVSVSISSAVKSAPEENSREMTETQMMIHSKSSNGK. S328 is modified (phosphoserine). The tract at residues 340–361 is disordered; it reads EENSREMTETQMMIHSKSSNGK. A compositionally biased stretch (polar residues) spans 348–361; the sequence is ETQMMIHSKSSNGK.

This sequence belongs to the G-protein coupled receptor 1 family. As to quaternary structure, homodimer and heterodimer. Heterodimerizes with CXCR5; leading to modulate the interaction between of CXCL13 and CXCR5. In terms of tissue distribution, expressed abundantly in lymphoid tissues such as spleen and lymph node, and in B- and T-lymphocytes. Also highly expressed in lung, heart and gastrointestinal tract, and weakly expressed in the urogenital system and brain. Expressed in astrocytes.

It localises to the cell membrane. Its function is as follows. G-protein coupled receptor expressed in lymphocytes that acts as a chemotactic receptor for B-cells, T-cells, splenic dendritic cells, monocytes/macrophages and astrocytes. Receptor for oxysterol 7-alpha,25-dihydroxycholesterol (7-alpha,25-OHC) and other related oxysterols. Mediates cell positioning and movement of a number of cells by binding the 7-alpha,25-OHC ligand that forms a chemotactic gradient. Binding of 7-alpha,25-OHC mediates the correct localization of B-cells during humoral immune responses. Guides B-cell movement along the B-cell zone-T-cell zone boundary and later to interfollicular and outer follicular regions. Its specific expression during B-cell maturation helps position B-cells appropriately for mounting T-dependent antibody responses. Collaborates with CXCR5 to mediate B-cell migration; probably by forming a heterodimer with CXCR5 that affects the interaction between of CXCL13 and CXCR5. Also acts as a chemotactic receptor for some T-cells upon binding to 7-alpha,25-OHC ligand. Promotes follicular helper T (Tfh) cells differentiation by positioning activated T-cells at the follicle-T-zone interface, promoting contact of newly activated CD4 T-cells with activated dendritic cells and exposing them to Tfh-cell-promoting inducible costimulator (ICOS) ligand. Expression in splenic dendritic cells is required for their homeostasis, localization and ability to induce B- and T-cell responses: GPR183 acts as a chemotactic receptor in dendritic cells that mediates the accumulation of CD4(+) dendritic cells in bridging channels. Regulates migration of astrocytes and is involved in communication between astrocytes and macrophages. Promotes osteoclast precursor migration to bone surfaces. Signals constitutively through G(i)-alpha, but not G(s)-alpha or G(q)-alpha. Signals constitutively also via MAPK1/3 (ERK1/2). The sequence is that of G-protein coupled receptor 183 from Homo sapiens (Human).